We begin with the raw amino-acid sequence, 278 residues long: Shikimate dehydrogenase (NADP(+)) (278 aa).

Shikimate contacts are provided by residues 14–16 and threonine 61; that span reads SKS. Lysine 65 functions as the Proton acceptor in the catalytic mechanism. Residues asparagine 86 and aspartate 102 each coordinate shikimate. Residues 127 to 131, 151 to 156, and methionine 221 each bind NADP(+); these read GAGGA and NRTASK. A shikimate-binding site is contributed by tyrosine 223. Residue glycine 245 participates in NADP(+) binding.

The protein belongs to the shikimate dehydrogenase family. Homodimer.

It catalyses the reaction shikimate + NADP(+) = 3-dehydroshikimate + NADPH + H(+). The protein operates within metabolic intermediate biosynthesis; chorismate biosynthesis; chorismate from D-erythrose 4-phosphate and phosphoenolpyruvate: step 4/7. Involved in the biosynthesis of the chorismate, which leads to the biosynthesis of aromatic amino acids. Catalyzes the reversible NADPH linked reduction of 3-dehydroshikimate (DHSA) to yield shikimate (SA). This Saccharophagus degradans (strain 2-40 / ATCC 43961 / DSM 17024) protein is Shikimate dehydrogenase (NADP(+)).